The chain runs to 55 residues: Large ribosomal subunit protein bL33 (55 aa).

The segment covering Met-1–Leu-11 has biased composition (basic and acidic residues). A disordered region spans residues Met-1–Lys-27. A compositionally biased stretch (polar residues) spans Thr-14–Ser-24.

Belongs to the bacterial ribosomal protein bL33 family.

In Dechloromonas aromatica (strain RCB), this protein is Large ribosomal subunit protein bL33.